A 326-amino-acid chain; its full sequence is AA9 family lytic polysaccharide monooxygenase B (326 aa).

A signal peptide spans M1 to A19. Cu(2+)-binding residues include H20 and H98. C57 and C192 are joined by a disulfide. O2 is bound by residues H178 and Q187. A Cu(2+)-binding site is contributed by Y189. A compositionally biased stretch (low complexity) spans P265–A281. The interval P265–G286 is disordered. Residues C289–L326 form the CBM1 domain.

It belongs to the polysaccharide monooxygenase AA9 family. It depends on Cu(2+) as a cofactor.

The protein localises to the secreted. The catalysed reaction is [(1-&gt;4)-beta-D-glucosyl]n+m + reduced acceptor + O2 = 4-dehydro-beta-D-glucosyl-[(1-&gt;4)-beta-D-glucosyl]n-1 + [(1-&gt;4)-beta-D-glucosyl]m + acceptor + H2O.. Lytic polysaccharide monooxygenase (LPMO) that depolymerizes crystalline and amorphous polysaccharides via the oxidation of scissile alpha- or beta-(1-4)-glycosidic bonds, yielding C1 and C4 oxidation products. Catalysis by LPMOs requires the reduction of the active-site copper from Cu(II) to Cu(I) by a reducing agent and H(2)O(2) or O(2) as a cosubstrate. Shows no activity on wheat arabinoxylan, konjac glucomannan, acetylated spruce galactoglucomannan, or cellopentaose. The chain is AA9 family lytic polysaccharide monooxygenase B from Thermothielavioides terrestris (strain ATCC 38088 / NRRL 8126) (Thielavia terrestris).